We begin with the raw amino-acid sequence, 310 residues long: Repression factor of MSEs protein 1 (310 aa).

2 disordered regions span residues 83 to 155 (TQEV…EANA) and 192 to 230 (DGIR…DEGE). Low complexity predominate over residues 92 to 106 (RNTSSSSSSTRSNSS). Residues 107 to 120 (ADISDTEYSGENTP) are compositionally biased toward polar residues. Basic residues predominate over residues 127–136 (SRRRRTRSRA). The span at 139 to 155 (RENSLPASLPSISEANA) shows a compositional bias: polar residues. The segment covering 192–208 (DGIRRRSSRISERDKRR) has biased composition (basic and acidic residues). A Phosphoserine modification is found at S215.

In terms of assembly, interacts directly with HST1 and SUM1. Required for the interaction between HST1 and SUM1.

It localises to the nucleus. Functionally, tethering factor required for histone deacetylase HST1-mediated repression. Probably involved in targeting HST1 to a subset of SUM1-regulated genes. The sequence is that of Repression factor of MSEs protein 1 (RFM1) from Saccharomyces cerevisiae (strain ATCC 204508 / S288c) (Baker's yeast).